Consider the following 160-residue polypeptide: Single-stranded DNA-binding protein (160 aa).

In terms of biological role, binds to single-stranded DNA (ssDNA). Has a regulatory effect on phage DNA metabolism and transcription of early genes. The protein is Single-stranded DNA-binding protein (XII) of Enterobacteria phage PRD1 (Bacteriophage PRD1).